We begin with the raw amino-acid sequence, 61 residues long: Short neurotoxin 4 (61 aa).

4 disulfides stabilise this stretch: Cys3–Cys23, Cys17–Cys40, Cys42–Cys53, and Cys54–Cys59.

This sequence belongs to the three-finger toxin family. Short-chain subfamily. Type I alpha-neurotoxin sub-subfamily. In terms of tissue distribution, expressed by the venom gland.

It is found in the secreted. Its function is as follows. Binds to muscle nicotinic acetylcholine receptor (nAChR) and inhibit acetylcholine from binding to the receptor, thereby impairing neuromuscular transmission. In Naja annulifera (Banded Egyptian cobra), this protein is Short neurotoxin 4.